A 332-amino-acid chain; its full sequence is DNA-directed RNA polymerase subunit alpha (332 aa).

Positions 1 to 244 (MKKHAKVYYS…AHLNLLADVE (244 aa)) are alpha N-terminal domain (alpha-NTD). An alpha C-terminal domain (alpha-CTD) region spans residues 259-332 (IKEEPIRRFS…NYKNENKGEN (74 aa)).

Belongs to the RNA polymerase alpha chain family. Homodimer. The RNAP catalytic core consists of 2 alpha, 1 beta, 1 beta' and 1 omega subunit. When a sigma factor is associated with the core the holoenzyme is formed, which can initiate transcription.

The enzyme catalyses RNA(n) + a ribonucleoside 5'-triphosphate = RNA(n+1) + diphosphate. Functionally, DNA-dependent RNA polymerase catalyzes the transcription of DNA into RNA using the four ribonucleoside triphosphates as substrates. This Mesomycoplasma hyopneumoniae (strain 7448) (Mycoplasma hyopneumoniae) protein is DNA-directed RNA polymerase subunit alpha.